The chain runs to 598 residues: Elongation factor 4 (598 aa).

Positions 4 to 181 (KKIRNFAIIA…AIVNLIPPPQ (178 aa)) constitute a tr-type G domain. Residues 16-21 (DHGKST) and 128-131 (NKID) contribute to the GTP site.

This sequence belongs to the TRAFAC class translation factor GTPase superfamily. Classic translation factor GTPase family. LepA subfamily.

It is found in the cell membrane. The catalysed reaction is GTP + H2O = GDP + phosphate + H(+). In terms of biological role, required for accurate and efficient protein synthesis under certain stress conditions. May act as a fidelity factor of the translation reaction, by catalyzing a one-codon backward translocation of tRNAs on improperly translocated ribosomes. Back-translocation proceeds from a post-translocation (POST) complex to a pre-translocation (PRE) complex, thus giving elongation factor G a second chance to translocate the tRNAs correctly. Binds to ribosomes in a GTP-dependent manner. The chain is Elongation factor 4 from Mesomycoplasma hyopneumoniae (strain 232) (Mycoplasma hyopneumoniae).